We begin with the raw amino-acid sequence, 94 residues long: Ribonuclease P protein component 1 (94 aa).

Belongs to the eukaryotic/archaeal RNase P protein component 1 family. In terms of assembly, consists of a catalytic RNA component and at least 4-5 protein subunits.

The protein resides in the cytoplasm. The enzyme catalyses Endonucleolytic cleavage of RNA, removing 5'-extranucleotides from tRNA precursor.. In terms of biological role, part of ribonuclease P, a protein complex that generates mature tRNA molecules by cleaving their 5'-ends. This Thermofilum pendens (strain DSM 2475 / Hrk 5) protein is Ribonuclease P protein component 1.